Reading from the N-terminus, the 485-residue chain is Sulfated surface glycoprotein 185 (485 aa).

The signal sequence occupies residues 1-20; the sequence is MSKLLLVALFGAIAVVATSA. Residue asparagine 193 is glycosylated (N-linked (GlcNAc...) asparagine). Residues 212-317 are disordered; the sequence is LSGPNVNPIG…PPVPPPPSPP (106 aa). 2 stretches are compositionally biased toward pro residues: residues 221–234 and 241–317; these read GPAP…PSPQ and PPSP…PSPP. Asparagine 347 carries N-linked (GlcNAc...) asparagine glycosylation.

As to quaternary structure, polymer. Intersubunit cross-links are formed between saccharide chains rather than between polypeptide chains. In terms of processing, hydroxylated on proline residues in the Pro-rich central domain. Post-translationally, glycosylated; contains sulfate-substituted glycans.

Its function is as follows. The extracellular matrix (ECM) of Volvox contains insoluble fibrous layers that surround individual cells at a distance to form contiguous cellular compartments. SSG 185 is the monomeric precursor of this substructure (C3Z structure). In Volvox carteri (Green alga), this protein is Sulfated surface glycoprotein 185.